The chain runs to 173 residues: dCTP deaminase, dUMP-forming (173 aa).

DCTP-binding positions include 93 to 98 (RSSIGR), aspartate 111, 119 to 121 (TLE), and glutamine 138. The active-site Proton donor/acceptor is the glutamate 121.

The protein belongs to the dCTP deaminase family. Homotrimer.

The enzyme catalyses dCTP + 2 H2O = dUMP + NH4(+) + diphosphate. Its pathway is pyrimidine metabolism; dUMP biosynthesis; dUMP from dCTP: step 1/1. In terms of biological role, bifunctional enzyme that catalyzes both the deamination of dCTP to dUTP and the hydrolysis of dUTP to dUMP without releasing the toxic dUTP intermediate. This is dCTP deaminase, dUMP-forming from Leptospira borgpetersenii serovar Hardjo-bovis (strain JB197).